The chain runs to 129 residues: D-ribose pyranase (129 aa).

Residue His-20 is the Proton donor of the active site. Substrate is bound by residues Asp-28, His-96, and 118–120 (YAN).

The protein belongs to the RbsD / FucU family. RbsD subfamily. In terms of assembly, homodecamer.

The protein localises to the cytoplasm. The enzyme catalyses beta-D-ribopyranose = beta-D-ribofuranose. The protein operates within carbohydrate metabolism; D-ribose degradation; D-ribose 5-phosphate from beta-D-ribopyranose: step 1/2. Functionally, catalyzes the interconversion of beta-pyran and beta-furan forms of D-ribose. The chain is D-ribose pyranase from Exiguobacterium sp. (strain ATCC BAA-1283 / AT1b).